Here is a 54-residue protein sequence, read N- to C-terminus: Hemolytic toxin (54 aa).

The tract at residues 3 to 12 (ALAGTIIAGA) is plays an important role in the hemolytic activity. The N-terminal region stretch occupies residues 11-30 (GASLGFQILDKVLGELGKVS).

This sequence belongs to the actinoporin family. Sea anemone subfamily. As to quaternary structure, octamer or nonamer in membranes. Monomer in the soluble state.

It localises to the secreted. It is found in the nematocyst. The protein resides in the target cell membrane. In terms of biological role, pore-forming protein that forms cations-selective hydrophilic pores of around 1 nm and causes cytolysis. Pore formation is a multi-step process that involves specific recognition of membrane sphingomyelin (but neither cholesterol nor phosphatidylcholine) using aromatic rich region and adjacent phosphocholine (POC) binding site, firm binding to the membrane (mainly driven by hydrophobic interactions) accompanied by the transfer of the N-terminal region to the lipid-water interface and finally pore formation after oligomerization of monomers. The polypeptide is Hemolytic toxin (Heteractis magnifica (Magnificent sea anemone)).